Consider the following 95-residue polypeptide: Co-chaperonin GroES (95 aa).

This sequence belongs to the GroES chaperonin family. As to quaternary structure, heptamer of 7 subunits arranged in a ring. Interacts with the chaperonin GroEL.

Its subcellular location is the cytoplasm. Its function is as follows. Together with the chaperonin GroEL, plays an essential role in assisting protein folding. The GroEL-GroES system forms a nano-cage that allows encapsulation of the non-native substrate proteins and provides a physical environment optimized to promote and accelerate protein folding. GroES binds to the apical surface of the GroEL ring, thereby capping the opening of the GroEL channel. In Chlorobium luteolum (strain DSM 273 / BCRC 81028 / 2530) (Pelodictyon luteolum), this protein is Co-chaperonin GroES.